A 258-amino-acid chain; its full sequence is Proliferating cell nuclear antigen (258 aa).

A DNA-binding region spans residues 61–80; the sequence is RCDHPVTLGMDLTSLSKILR. K127 participates in a covalent cross-link: Glycyl lysine isopeptide (Lys-Gly) (interchain with G-Cter in SUMO). Residue K164 forms a Glycyl lysine isopeptide (Lys-Gly) (interchain with G-Cter in SUMO); alternate linkage. K164 is covalently cross-linked (Glycyl lysine isopeptide (Lys-Gly) (interchain with G-Cter in ubiquitin); alternate).

It belongs to the PCNA family. As to quaternary structure, homotrimer. Interacts with RAD30. Interacts with MCM10. Interacts with UBP10. In terms of processing, sumoylated on Lys-164, and to a lesser extent on Lys-127 by the UBC9/SIZ1 complex during S-phase; which impairs ubiquitination and function in DNA repair. Monoubiquitinated on Lys-164 by the UBC2/RAD18 complex upon DNA damage, and then polyubiquitinated through 'Lys-63'-linkage by UBC13/MMS2. Ubiquitination is required for UBC2-mediated DNA repair. Post-translationally, lys-164 is deubiquitinated by UBP10.

It is found in the nucleus. Functionally, this protein is an auxiliary protein of DNA polymerase delta and is involved in the control of eukaryotic DNA replication by increasing the polymerase's processibility during elongation of the leading strand. Involved in DNA repair. This chain is Proliferating cell nuclear antigen (POL30), found in Saccharomyces cerevisiae (strain ATCC 204508 / S288c) (Baker's yeast).